The sequence spans 177 residues: Mitochondrial inner membrane protease subunit 2 (177 aa).

Catalysis depends on residues Ser41 and Lys91. A helical transmembrane segment spans residues 134–152 (TFGPISSGLVIGKAITIVW).

The protein belongs to the peptidase S26 family. IMP2 subfamily. Component of the mitochondrial inner membrane peptidase (IMP) complex which at least consists of IMP1, IMP2 and SOM1. The N-terminus is blocked.

Its subcellular location is the mitochondrion inner membrane. Catalytic component of the mitochondrial inner membrane peptidase (IMP) complex. IMP catalyzes the removal of signal peptides required for the targeting of proteins from the mitochondrial matrix, across the inner membrane, into the inter-membrane space. The two catalytic IMP subunits seem to have non-overlapping substrate specificities. IMP2 substrates include nuclear encoded CYB2, mitochondrially encoded COX2 and cytochrome c1. Required for the stability of IMP1. The sequence is that of Mitochondrial inner membrane protease subunit 2 (IMP2) from Saccharomyces cerevisiae (strain ATCC 204508 / S288c) (Baker's yeast).